A 25-amino-acid chain; its full sequence is Chaperonin GroEL (25 aa).

It belongs to the chaperonin (HSP60) family. As to quaternary structure, forms a cylinder of 14 subunits composed of two heptameric rings stacked back-to-back. Interacts with the co-chaperonin GroES.

It is found in the cytoplasm. The enzyme catalyses ATP + H2O + a folded polypeptide = ADP + phosphate + an unfolded polypeptide.. In terms of biological role, together with its co-chaperonin GroES, plays an essential role in assisting protein folding. The GroEL-GroES system forms a nano-cage that allows encapsulation of the non-native substrate proteins and provides a physical environment optimized to promote and accelerate protein folding. This chain is Chaperonin GroEL, found in Delftia acidovorans (Pseudomonas acidovorans).